We begin with the raw amino-acid sequence, 74 residues long: Large ribosomal subunit protein bL31 (74 aa).

Belongs to the bacterial ribosomal protein bL31 family. Type A subfamily. As to quaternary structure, part of the 50S ribosomal subunit.

Binds the 23S rRNA. The sequence is that of Large ribosomal subunit protein bL31 from Synechococcus sp. (strain JA-2-3B'a(2-13)) (Cyanobacteria bacterium Yellowstone B-Prime).